The sequence spans 155 residues: Large ribosomal subunit protein uL13 (155 aa).

This sequence belongs to the universal ribosomal protein uL13 family. Part of the 50S ribosomal subunit.

Functionally, this protein is one of the early assembly proteins of the 50S ribosomal subunit, although it is not seen to bind rRNA by itself. It is important during the early stages of 50S assembly. The polypeptide is Large ribosomal subunit protein uL13 (Aeropyrum pernix (strain ATCC 700893 / DSM 11879 / JCM 9820 / NBRC 100138 / K1)).